We begin with the raw amino-acid sequence, 513 residues long: Bifunctional purine biosynthesis protein PurH (513 aa).

Residues 1–147 (MIQIKRALVS…KNHKNVVVLT (147 aa)) form the MGS-like domain.

The protein belongs to the PurH family.

The catalysed reaction is (6R)-10-formyltetrahydrofolate + 5-amino-1-(5-phospho-beta-D-ribosyl)imidazole-4-carboxamide = 5-formamido-1-(5-phospho-D-ribosyl)imidazole-4-carboxamide + (6S)-5,6,7,8-tetrahydrofolate. It catalyses the reaction IMP + H2O = 5-formamido-1-(5-phospho-D-ribosyl)imidazole-4-carboxamide. The protein operates within purine metabolism; IMP biosynthesis via de novo pathway; 5-formamido-1-(5-phospho-D-ribosyl)imidazole-4-carboxamide from 5-amino-1-(5-phospho-D-ribosyl)imidazole-4-carboxamide (10-formyl THF route): step 1/1. Its pathway is purine metabolism; IMP biosynthesis via de novo pathway; IMP from 5-formamido-1-(5-phospho-D-ribosyl)imidazole-4-carboxamide: step 1/1. The chain is Bifunctional purine biosynthesis protein PurH from Leptospira biflexa serovar Patoc (strain Patoc 1 / Ames).